Consider the following 272-residue polypeptide: 3-deoxy-manno-octulosonate cytidylyltransferase (272 aa).

Belongs to the KdsB family.

It localises to the cytoplasm. It catalyses the reaction 3-deoxy-alpha-D-manno-oct-2-ulosonate + CTP = CMP-3-deoxy-beta-D-manno-octulosonate + diphosphate. It participates in nucleotide-sugar biosynthesis; CMP-3-deoxy-D-manno-octulosonate biosynthesis; CMP-3-deoxy-D-manno-octulosonate from 3-deoxy-D-manno-octulosonate and CTP: step 1/1. Its pathway is bacterial outer membrane biogenesis; lipopolysaccharide biosynthesis. Activates KDO (a required 8-carbon sugar) for incorporation into bacterial lipopolysaccharide in Gram-negative bacteria. The sequence is that of 3-deoxy-manno-octulosonate cytidylyltransferase from Verminephrobacter eiseniae (strain EF01-2).